Here is a 225-residue protein sequence, read N- to C-terminus: Phosphoserine phosphatase (225 aa).

M1 is modified (N-acetylmethionine). Catalysis depends on D20, which acts as the Nucleophile. Mg(2+) contacts are provided by D20 and D22. An L-serine-binding site is contributed by 20–22 (DVD). The Proton donor role is filled by D22. M52 serves as a coordination point for O-phospho-L-serine. G53 lines the phosphate pocket. L-serine contacts are provided by residues 109–111 (SGG) and K158. O-phospho-L-serine contacts are provided by residues 109 to 111 (SGG) and K158. A Mg(2+)-binding site is contributed by D179. T182 provides a ligand contact to O-phospho-L-serine. T182 is a phosphate binding site.

This sequence belongs to the HAD-like hydrolase superfamily. SerB family. In terms of assembly, homodimer. The cofactor is Mg(2+).

The protein resides in the cytoplasm. It is found in the cytosol. It carries out the reaction O-phospho-L-serine + H2O = L-serine + phosphate. The enzyme catalyses O-phospho-D-serine + H2O = D-serine + phosphate. The protein operates within amino-acid biosynthesis; L-serine biosynthesis; L-serine from 3-phospho-D-glycerate: step 3/3. Functionally, catalyzes the last irreversible step in the biosynthesis of L-serine from carbohydrates, the dephosphorylation of O-phospho-L-serine to L-serine. L-serine can then be used in protein synthesis, to produce other amino acids, in nucleotide metabolism or in glutathione synthesis, or can be racemized to D-serine, a neuromodulator. May also act on O-phospho-D-serine. The sequence is that of Phosphoserine phosphatase from Mus musculus (Mouse).